A 343-amino-acid chain; its full sequence is ELAV-like protein 3 (343 aa).

3 RRM domains span residues 35-113, 121-202, and 260-338; these read TNLI…YARP, ANLY…FANN, and WCIF…FKTS.

Belongs to the RRM elav family.

Functionally, RNA-binding protein that binds to AU-rich sequences (AREs) of target mRNAs. May also bind poly-A tracts via RRM 3. May be involved in neuronal differentiation and maintenance. The chain is ELAV-like protein 3 from Xenopus tropicalis (Western clawed frog).